The sequence spans 181 residues: Mitochondrial pyruvate carrier-like protein (181 aa).

2 helical membrane-spanning segments follow: residues 23-42 (YLAS…PLAA) and 52-74 (IISG…FAYR). The interval 125–154 (TGSVDSSATSTGSVDSSATSTGSVDSSAAT) is disordered.

This sequence belongs to the mitochondrial pyruvate carrier (MPC) (TC 2.A.105) family.

The protein localises to the mitochondrion inner membrane. In terms of biological role, may mediate the uptake of pyruvate into mitochondria. The chain is Mitochondrial pyruvate carrier-like protein from Bos taurus (Bovine).